A 194-amino-acid chain; its full sequence is Flagellar transcriptional regulator FlhC (194 aa).

Cys139, Cys142, Cys159, and Cys162 together coordinate Zn(2+).

Belongs to the FlhC family. As to quaternary structure, heterohexamer composed of two FlhC and four FlhD subunits. Each FlhC binds a FlhD dimer, forming a heterotrimer, and a hexamer assembles by dimerization of two heterotrimers. Zn(2+) is required as a cofactor.

The protein localises to the cytoplasm. In terms of biological role, functions in complex with FlhD as a master transcriptional regulator that regulates transcription of several flagellar and non-flagellar operons by binding to their promoter region. Activates expression of class 2 flagellar genes, including fliA, which is a flagellum-specific sigma factor that turns on the class 3 genes. Also regulates genes whose products function in a variety of physiological pathways. The protein is Flagellar transcriptional regulator FlhC of Xenorhabdus nematophila (Achromobacter nematophilus).